The chain runs to 721 residues: Polyribonucleotide nucleotidyltransferase (721 aa).

Mg(2+) contacts are provided by aspartate 495 and aspartate 501. The region spanning 562-621 (PRLLSFRIDPELIGTVIGPGGRTIKGITERTNTKIDIEDGGIVTIASHDGAAAEEAQKII) is the KH domain. The region spanning 631 to 699 (GEIFTGVVTR…SRGRINLTLR (69 aa)) is the S1 motif domain. Residues 702-721 (SQNSGMSYPEPTPTPVAPLN) are disordered. Pro residues predominate over residues 711 to 721 (EPTPTPVAPLN).

This sequence belongs to the polyribonucleotide nucleotidyltransferase family. It depends on Mg(2+) as a cofactor.

It localises to the cytoplasm. It carries out the reaction RNA(n+1) + phosphate = RNA(n) + a ribonucleoside 5'-diphosphate. Its function is as follows. Involved in mRNA degradation. Catalyzes the phosphorolysis of single-stranded polyribonucleotides processively in the 3'- to 5'-direction. This Prochlorococcus marinus (strain MIT 9312) protein is Polyribonucleotide nucleotidyltransferase.